The following is a 445-amino-acid chain: ATP synthase subunit b-delta (445 aa).

Positions 1 to 168 are ATP synthase subunit b; that stretch reads MSIFIGQLIG…PSSAVLEAGA (168 aa). The chain crosses the membrane as a helical span at residues 3-23; the sequence is IFIGQLIGFAVIVFILVKWVV. The ATP synthase subunit delta stretch occupies residues 169–445; the sequence is SLNLRAASRE…LAAARTGLPD (277 aa).

The protein in the N-terminal section; belongs to the ATPase B chain family. In the C-terminal section; belongs to the ATPase delta chain family. As to quaternary structure, F-type ATPases have 2 components, F(1) - the catalytic core - and F(0) - the membrane proton channel. F(1) has five subunits: alpha(3), beta(3), gamma(1), delta(1), epsilon(1). F(0) has three main subunits: a(1), b(2) and c(10-14). The alpha and beta chains form an alternating ring which encloses part of the gamma chain. F(1) is attached to F(0) by a central stalk formed by the gamma and epsilon chains, while a peripheral stalk is formed by the delta and b chains.

It localises to the cell membrane. Its function is as follows. F(1)F(0) ATP synthase produces ATP from ADP in the presence of a proton or sodium gradient. F-type ATPases consist of two structural domains, F(1) containing the extramembraneous catalytic core and F(0) containing the membrane proton channel, linked together by a central stalk and a peripheral stalk. During catalysis, ATP synthesis in the catalytic domain of F(1) is coupled via a rotary mechanism of the central stalk subunits to proton translocation. In terms of biological role, this fusion protein includes a component of the F(0) channel (subunit b) and of the F(1) subunit (subunit delta). Two copies of subunit b and one of delta together form the peripheral 'stator' stalk which links F(1) to F(0). This chain is ATP synthase subunit b-delta (atpFH), found in Mycolicibacterium vanbaalenii (strain DSM 7251 / JCM 13017 / BCRC 16820 / KCTC 9966 / NRRL B-24157 / PYR-1) (Mycobacterium vanbaalenii).